The primary structure comprises 98 residues: Protein FAM24A (98 aa).

The first 29 residues, Met-1–Cys-29, serve as a signal peptide directing secretion.

It belongs to the FAM24 family.

Its subcellular location is the secreted. The polypeptide is Protein FAM24A (Fam24a) (Mus musculus (Mouse)).